A 233-amino-acid polypeptide reads, in one-letter code: Pathogenesis-related thaumatin-like protein 3.2 (233 aa).

The first 22 residues, 1–22 (MARAMHTVWIALVPTLFVFLQG), serve as a signal peptide directing secretion. 8 disulfides stabilise this stretch: Cys-36–Cys-232, Cys-77–Cys-87, Cys-92–Cys-98, Cys-145–Cys-221, Cys-151–Cys-204, Cys-159–Cys-169, Cys-173–Cys-182, and Cys-183–Cys-191. N-linked (GlcNAc...) asparagine glycosylation is present at Asn-195.

It belongs to the thaumatin family. In terms of tissue distribution, strongly expressed in roots and in female and male strobili, and, to a lower extent, in cotyledons, leaves, stems and pollen grains.

Its function is as follows. May be involved in disease resistance. In Cryptomeria japonica (Japanese cedar), this protein is Pathogenesis-related thaumatin-like protein 3.2.